The following is a 498-amino-acid chain: Glycerol kinase (498 aa).

Threonine 11 lines the ADP pocket. ATP contacts are provided by threonine 11, serine 12, and serine 13. Threonine 11 serves as a coordination point for sn-glycerol 3-phosphate. An ADP-binding site is contributed by arginine 15. Residues arginine 81, glutamate 82, tyrosine 133, and aspartate 242 each coordinate sn-glycerol 3-phosphate. Arginine 81, glutamate 82, tyrosine 133, aspartate 242, and glutamine 243 together coordinate glycerol. Residues threonine 264 and glycine 307 each coordinate ADP. The ATP site is built by threonine 264, glycine 307, glutamine 311, and glycine 408. Glycine 408 and asparagine 412 together coordinate ADP.

This sequence belongs to the FGGY kinase family.

It catalyses the reaction glycerol + ATP = sn-glycerol 3-phosphate + ADP + H(+). Its pathway is polyol metabolism; glycerol degradation via glycerol kinase pathway; sn-glycerol 3-phosphate from glycerol: step 1/1. Inhibited by fructose 1,6-bisphosphate (FBP). Functionally, key enzyme in the regulation of glycerol uptake and metabolism. Catalyzes the phosphorylation of glycerol to yield sn-glycerol 3-phosphate. This Ralstonia pickettii (strain 12J) protein is Glycerol kinase.